The sequence spans 565 residues: Sulfite reductase [NADPH] hemoprotein beta-component (565 aa).

[4Fe-4S] cluster-binding residues include C429, C435, C474, and C478. C478 lines the siroheme pocket.

Belongs to the nitrite and sulfite reductase 4Fe-4S domain family. In terms of assembly, alpha(8)-beta(8). The alpha component is a flavoprotein, the beta component is a hemoprotein. Requires siroheme as cofactor. [4Fe-4S] cluster is required as a cofactor.

It carries out the reaction hydrogen sulfide + 3 NADP(+) + 3 H2O = sulfite + 3 NADPH + 4 H(+). It participates in sulfur metabolism; hydrogen sulfide biosynthesis; hydrogen sulfide from sulfite (NADPH route): step 1/1. Its function is as follows. Component of the sulfite reductase complex that catalyzes the 6-electron reduction of sulfite to sulfide. This is one of several activities required for the biosynthesis of L-cysteine from sulfate. The chain is Sulfite reductase [NADPH] hemoprotein beta-component from Shewanella baltica (strain OS223).